The primary structure comprises 224 residues: Elongation factor Ts (224 aa).

The interval 81–84 (TDFV) is involved in Mg(2+) ion dislocation from EF-Tu.

The protein belongs to the EF-Ts family.

It localises to the cytoplasm. Associates with the EF-Tu.GDP complex and induces the exchange of GDP to GTP. It remains bound to the aminoacyl-tRNA.EF-Tu.GTP complex up to the GTP hydrolysis stage on the ribosome. The sequence is that of Elongation factor Ts from Finegoldia magna (strain ATCC 29328 / DSM 20472 / WAL 2508) (Peptostreptococcus magnus).